The chain runs to 87 residues: MAMRFLNIGYGNIVSAHRIIAIVSPESAPIKRTVQEAREHNALLDATYGRKTRAVIVMDDGHVVLSPIQPETIAHRLNNKEELSEEG.

This sequence belongs to the RemA family.

This is Putative regulatory protein BCQ_3657 from Bacillus cereus (strain Q1).